The following is a 656-amino-acid chain: uncharacterized protein (656 aa).

Residues 623 to 656 (EIDIPGTPASIDPEWSRPPGSITDDHVFDAPLHR) are disordered. Residues 645-656 (TDDHVFDAPLHR) are compositionally biased toward basic and acidic residues.

This is an uncharacterized protein from Mycobacterium tuberculosis (strain ATCC 25618 / H37Rv).